The chain runs to 370 residues: Queuine tRNA-ribosyltransferase (370 aa).

The active-site Proton acceptor is the aspartate 89. Substrate contacts are provided by residues 89–93 (DSGGF), aspartate 143, glutamine 185, and glycine 212. Residues 243–249 (GVGTPED) are RNA binding. The active-site Nucleophile is the aspartate 262. The RNA binding; important for wobble base 34 recognition stretch occupies residues 267 to 271 (TRNAR). Residues cysteine 300, cysteine 302, cysteine 305, and histidine 331 each coordinate Zn(2+).

Belongs to the queuine tRNA-ribosyltransferase family. Homodimer. Within each dimer, one monomer is responsible for RNA recognition and catalysis, while the other monomer binds to the replacement base PreQ1. Requires Zn(2+) as cofactor.

The enzyme catalyses 7-aminomethyl-7-carbaguanine + guanosine(34) in tRNA = 7-aminomethyl-7-carbaguanosine(34) in tRNA + guanine. The protein operates within tRNA modification; tRNA-queuosine biosynthesis. In terms of biological role, catalyzes the base-exchange of a guanine (G) residue with the queuine precursor 7-aminomethyl-7-deazaguanine (PreQ1) at position 34 (anticodon wobble position) in tRNAs with GU(N) anticodons (tRNA-Asp, -Asn, -His and -Tyr). Catalysis occurs through a double-displacement mechanism. The nucleophile active site attacks the C1' of nucleotide 34 to detach the guanine base from the RNA, forming a covalent enzyme-RNA intermediate. The proton acceptor active site deprotonates the incoming PreQ1, allowing a nucleophilic attack on the C1' of the ribose to form the product. After dissociation, two additional enzymatic reactions on the tRNA convert PreQ1 to queuine (Q), resulting in the hypermodified nucleoside queuosine (7-(((4,5-cis-dihydroxy-2-cyclopenten-1-yl)amino)methyl)-7-deazaguanosine). The sequence is that of Queuine tRNA-ribosyltransferase from Methylobacillus flagellatus (strain ATCC 51484 / DSM 6875 / VKM B-1610 / KT).